The primary structure comprises 314 residues: ATP synthase gamma chain (314 aa).

It belongs to the ATPase gamma chain family. F-type ATPases have 2 components, CF(1) - the catalytic core - and CF(0) - the membrane proton channel. CF(1) has five subunits: alpha(3), beta(3), gamma(1), delta(1), epsilon(1). CF(0) has three main subunits: a, b and c.

It localises to the cell membrane. Produces ATP from ADP in the presence of a proton gradient across the membrane. The gamma chain is believed to be important in regulating ATPase activity and the flow of protons through the CF(0) complex. The protein is ATP synthase gamma chain of Cutibacterium acnes (strain DSM 16379 / KPA171202) (Propionibacterium acnes).